We begin with the raw amino-acid sequence, 221 residues long: N-(5'-phosphoribosyl)anthranilate isomerase (221 aa).

It belongs to the TrpF family.

The catalysed reaction is N-(5-phospho-beta-D-ribosyl)anthranilate = 1-(2-carboxyphenylamino)-1-deoxy-D-ribulose 5-phosphate. The protein operates within amino-acid biosynthesis; L-tryptophan biosynthesis; L-tryptophan from chorismate: step 3/5. The chain is N-(5'-phosphoribosyl)anthranilate isomerase from Chlorobaculum tepidum (strain ATCC 49652 / DSM 12025 / NBRC 103806 / TLS) (Chlorobium tepidum).